Here is a 465-residue protein sequence, read N- to C-terminus: uncharacterized protein (465 aa).

Disordered regions lie at residues Ser95–Pro173, Gln407–Lys426, and Ala443–Lys465. Basic residues predominate over residues Lys118 to Ser137. Residues Ser138–Lys150 are compositionally biased toward low complexity. The span at Thr153–Pro173 shows a compositional bias: basic and acidic residues. Positions Met451 to Lys465 are enriched in basic residues.

This is an uncharacterized protein from Caenorhabditis elegans.